Consider the following 444-residue polypeptide: Putative dipeptidase CPC735_015490 (444 aa).

An N-terminal signal peptide occupies residues 1–34 (MSQRTEHNGSWLRNAGSLLSVLACVAVLASPASA). Zn(2+) contacts are provided by H67, D69, and E178. Residues C118 and C207 are joined by a disulfide bond. H205 provides a ligand contact to substrate. 2 residues coordinate Zn(2+): H250 and H271. 2 residues coordinate substrate: R282 and D342. The N-linked (GlcNAc...) asparagine glycan is linked to N413.

The protein belongs to the metallo-dependent hydrolases superfamily. Peptidase M19 family. Zn(2+) serves as cofactor.

The enzyme catalyses an L-aminoacyl-L-amino acid + H2O = 2 an L-alpha-amino acid. Functionally, hydrolyzes a wide range of dipeptides. This chain is Putative dipeptidase CPC735_015490, found in Coccidioides posadasii (strain C735) (Valley fever fungus).